Consider the following 417-residue polypeptide: Serine--tRNA ligase (417 aa).

226-228 (TSE) is a binding site for L-serine. ATP-binding positions include 257 to 259 (RRE) and Val-273. L-serine is bound at residue Glu-280. ATP is bound at residue 344–347 (ELTS). L-serine is bound at residue Thr-379.

Belongs to the class-II aminoacyl-tRNA synthetase family. Type-1 seryl-tRNA synthetase subfamily. Homodimer. The tRNA molecule binds across the dimer.

The protein resides in the cytoplasm. It catalyses the reaction tRNA(Ser) + L-serine + ATP = L-seryl-tRNA(Ser) + AMP + diphosphate + H(+). The enzyme catalyses tRNA(Sec) + L-serine + ATP = L-seryl-tRNA(Sec) + AMP + diphosphate + H(+). Its pathway is aminoacyl-tRNA biosynthesis; selenocysteinyl-tRNA(Sec) biosynthesis; L-seryl-tRNA(Sec) from L-serine and tRNA(Sec): step 1/1. Its function is as follows. Catalyzes the attachment of serine to tRNA(Ser). Is also able to aminoacylate tRNA(Sec) with serine, to form the misacylated tRNA L-seryl-tRNA(Sec), which will be further converted into selenocysteinyl-tRNA(Sec). The protein is Serine--tRNA ligase of Mycobacterium sp. (strain KMS).